Reading from the N-terminus, the 202-residue chain is FMN-dependent NADH:quinone oxidoreductase 1 (202 aa).

Residues Ser9, 15-17, 95-98, and 139-142 contribute to the FMN site; these read SAS, MYNF, and TSGG.

The protein belongs to the azoreductase type 1 family. Homodimer. FMN serves as cofactor.

The catalysed reaction is 2 a quinone + NADH + H(+) = 2 a 1,4-benzosemiquinone + NAD(+). It catalyses the reaction N,N-dimethyl-1,4-phenylenediamine + anthranilate + 2 NAD(+) = 2-(4-dimethylaminophenyl)diazenylbenzoate + 2 NADH + 2 H(+). Quinone reductase that provides resistance to thiol-specific stress caused by electrophilic quinones. In terms of biological role, also exhibits azoreductase activity. Catalyzes the reductive cleavage of the azo bond in aromatic azo compounds to the corresponding amines. This Pseudomonas syringae pv. tomato (strain ATCC BAA-871 / DC3000) protein is FMN-dependent NADH:quinone oxidoreductase 1.